A 142-amino-acid polypeptide reads, in one-letter code: Hemoglobin subunit zeta (142 aa).

Residue Ser2 is modified to N-acetylserine. Residues 2-142 (SLTKAERTMV…VSSVLTEKYR (141 aa)) form the Globin domain. Ser53 carries the post-translational modification Phosphoserine. Residue His59 participates in heme b binding. Ser73 carries the post-translational modification Phosphoserine. His88 serves as a coordination point for heme b.

The protein belongs to the globin family. Heterotetramer of two zeta chains and beta-type chains.

Functionally, the zeta chain is an alpha-type chain of mammalian embryonic hemoglobin. The sequence is that of Hemoglobin subunit zeta (HBZ1) from Equus caballus (Horse).